Here is a 20-residue protein sequence, read N- to C-terminus: Non-specific lipid-transfer protein-like protein (20 aa).

The protein belongs to the plant LTP family.

The sequence is that of Non-specific lipid-transfer protein-like protein from Jatropha curcas (Barbados nut).